The following is a 112-amino-acid chain: UPF0102 protein Spea_0251 (112 aa).

This sequence belongs to the UPF0102 family.

In Shewanella pealeana (strain ATCC 700345 / ANG-SQ1), this protein is UPF0102 protein Spea_0251.